Reading from the N-terminus, the 433-residue chain is Trigger factor (433 aa).

The PPIase FKBP-type domain occupies 163–248 (GDFVTFDFKG…IKEIKVKELP (86 aa)).

This sequence belongs to the FKBP-type PPIase family. Tig subfamily.

It localises to the cytoplasm. It carries out the reaction [protein]-peptidylproline (omega=180) = [protein]-peptidylproline (omega=0). In terms of biological role, involved in protein export. Acts as a chaperone by maintaining the newly synthesized protein in an open conformation. Functions as a peptidyl-prolyl cis-trans isomerase. The protein is Trigger factor of Geotalea uraniireducens (strain Rf4) (Geobacter uraniireducens).